Reading from the N-terminus, the 203-residue chain is SOSS complex subunit B1-A (203 aa).

A DNA-binding region (OB) is located at residues 22–92 (IVLETGRVTK…TLYTGRGGDL (71 aa)). The segment at 110–203 (EPNPEYIAQQ…GKESRRTGKR (94 aa)) is disordered. A compositionally biased stretch (low complexity) spans 118-140 (QQSQSKQGQQESGTGTNNHNSSS). A compositionally biased stretch (polar residues) spans 149–182 (ENGNGSNSSGPPAHQSTAPAHSASGRITRSQPNH).

The protein belongs to the SOSS-B family. SOSS-B1 subfamily. As to quaternary structure, component of the SOSS complex, composed of soss-b (soss-b1/nabp2 or soss-b2/nabp1), soss-a/ints3 and soss-c/inip. SOSS complexes containing soss-b1/nabp2 are more abundant than complexes containing soss-b2/nabp1.

The protein localises to the nucleus. Functionally, component of the SOSS complex, a multiprotein complex that functions downstream of the MRN complex to promote DNA repair and G2/M checkpoint. In the SOSS complex, acts as a sensor of single-stranded DNA that binds to single-stranded DNA. The SOSS complex associates with DNA lesions and influences diverse endpoints in the cellular DNA damage response including cell-cycle checkpoint activation, recombinational repair and maintenance of genomic stability. Required for efficient homologous recombination-dependent repair of double-strand breaks (DSBs). This Xenopus laevis (African clawed frog) protein is SOSS complex subunit B1-A (nabp2-a).